The sequence spans 687 residues: Polyphosphate kinase (687 aa).

Asn-45 lines the ATP pocket. Residues Arg-375 and Arg-405 each coordinate Mg(2+). Catalysis depends on His-435, which acts as the Phosphohistidine intermediate. ATP-binding residues include Tyr-472, Arg-568, and His-596.

Belongs to the polyphosphate kinase 1 (PPK1) family. Requires Mg(2+) as cofactor. In terms of processing, an intermediate of this reaction is the autophosphorylated ppk in which a phosphate is covalently linked to a histidine residue through a N-P bond.

The catalysed reaction is [phosphate](n) + ATP = [phosphate](n+1) + ADP. In terms of biological role, catalyzes the reversible transfer of the terminal phosphate of ATP to form a long-chain polyphosphate (polyP). The protein is Polyphosphate kinase of Burkholderia multivorans (strain ATCC 17616 / 249).